Here is a 272-residue protein sequence, read N- to C-terminus: MAIPAALPPLPFNPTRVRSYMLRLPLFTRIVLLVILAFWLLELQTIWSVVQWGSLTPNEIGIGSMYRLNTYPFIHVGFFHAFVNLLALTPLLERFEAEHGTLTAVALFIGPLSTFPAGIYILVEKFILRSNTAVVGASVWIFLLLGSEAIKTFKSNPYFSLGTTKIPTWTSPLFACALVSIFVPNTSFLGHLSAIIIGYLLGLGYLKVFVPPEKILRWIEGKLNLLGRLPHYVSVDQKTYGRYGVLPTATAAVGGERPTPLSYLGTNQRLGP.

5 helical membrane passes run 30–50 (IVLL…WSVV), 72–92 (PFIH…TPLL), 103–123 (TAVA…YILV), 133–153 (AVVG…IKTF), and 164–184 (TKIP…IFVP). Residue Ser-138 is the Nucleophile of the active site. An N-linked (GlcNAc...) asparagine glycan is attached at Asn-185. The helical transmembrane segment at 186 to 206 (TSFLGHLSAIIIGYLLGLGYL) threads the bilayer. The active site involves His-191.

This sequence belongs to the peptidase S54 family.

It localises to the membrane. The enzyme catalyses Cleaves type-1 transmembrane domains using a catalytic dyad composed of serine and histidine that are contributed by different transmembrane domains.. Its function is as follows. Rhomboid protease that catalyzes intramembrane proteolysis. Required for transcription factor srbA activation by mediating its release from the membrane and thereby regulating its activity under hypoxic conditions. Essential for iron homeostasis and resistance to azoles such as voriconazole. Required for virulence in murine models of invasive pulmonary aspergillosis (IPA). The chain is Rhomboid-type serine protease B from Aspergillus fumigatus (strain CBS 144.89 / FGSC A1163 / CEA10) (Neosartorya fumigata).